The sequence spans 250 residues: Urease accessory protein UreG 3 (250 aa).

Residues 1-24 (MPDNASAQQPGQPAQGPNEHYHQP) form a disordered region. Low complexity predominate over residues 7 to 17 (AQQPGQPAQGP). Position 37 to 44 (37 to 44 (GPVGTGKS)) interacts with GTP. The interval 230–250 (GTHVPTDPGPMAPHSHSHDGS) is disordered.

The protein belongs to the SIMIBI class G3E GTPase family. UreG subfamily. As to quaternary structure, homodimer. UreD, UreF and UreG form a complex that acts as a GTP-hydrolysis-dependent molecular chaperone, activating the urease apoprotein by helping to assemble the nickel containing metallocenter of UreC. The UreE protein probably delivers the nickel.

It localises to the cytoplasm. Facilitates the functional incorporation of the urease nickel metallocenter. This process requires GTP hydrolysis, probably effectuated by UreG. In Streptomyces griseus subsp. griseus (strain JCM 4626 / CBS 651.72 / NBRC 13350 / KCC S-0626 / ISP 5235), this protein is Urease accessory protein UreG 3.